The chain runs to 285 residues: MNIIKNINLLEKKIKELKKKNKIIGLVPTMGNLHDGHIKLILLAKKNVDIVIVSIFINPMQFEDLLDLKKYPKTFEQDCCILKQEKVEILFCPDVNEMYPLGLKNHTYIDVPKLSKIIEGKVRPGHFIGVTTIVCKLFNLIQPNFSFFGEKDYQQLLIIKKLVKELNYPIKIISLPIIRLKNGLAFSSRNKHLSDLAQQKASYLYQAIKQTCNFIKNNNGKNIKKNIHTSRKYLIKKGFYIDIFNAYDSKTLDPISKDSKNIIIIASVWLGKIRLIDNKKIILRD.

Met30–His37 serves as a coordination point for ATP. The active-site Proton donor is the His37. A (R)-pantoate-binding site is contributed by Gln61. Gln61 contacts beta-alanine. Gly149–Asp152 contacts ATP. A (R)-pantoate-binding site is contributed by Gln155. Residues Ile178 and Phe186–Arg189 contribute to the ATP site.

Belongs to the pantothenate synthetase family. As to quaternary structure, homodimer.

It localises to the cytoplasm. The catalysed reaction is (R)-pantoate + beta-alanine + ATP = (R)-pantothenate + AMP + diphosphate + H(+). The protein operates within cofactor biosynthesis; (R)-pantothenate biosynthesis; (R)-pantothenate from (R)-pantoate and beta-alanine: step 1/1. Its function is as follows. Catalyzes the condensation of pantoate with beta-alanine in an ATP-dependent reaction via a pantoyl-adenylate intermediate. The sequence is that of Pantothenate synthetase from Buchnera aphidicola subsp. Schizaphis graminum (strain Sg).